Reading from the N-terminus, the 606-residue chain is Albumin A (606 aa).

Residues 1-18 (MKWITLICLLISSTLIES) form the signal peptide. A propeptide spanning residues 19 to 24 (RIIFKR) is cleaved from the precursor. 3 consecutive Albumin domains span residues 22-211 (FKRD…ELMK), 212-401 (HSHS…RFMN), and 402-599 (EAKE…VLIE). His30 is a binding site for Cu cation. Intrachain disulfides connect Cys80–Cys89, Cys102–Cys118, Cys117–Cys128, Cys148–Cys193, Cys192–Cys201, Cys224–Cys270, Cys269–Cys277, Cys289–Cys303, Cys302–Cys313, Cys340–Cys383, Cys382–Cys391, Cys414–Cys460, Cys459–Cys470, Cys483–Cys499, Cys498–Cys509, Cys536–Cys581, and Cys580–Cys589.

The protein belongs to the ALB/AFP/VDB family. In terms of tissue distribution, plasma.

The protein resides in the secreted. In terms of biological role, binds water, Ca(2+), Na(+), K(+), fatty acids, hormones, bilirubin and drugs. Its main function is the regulation of the colloidal osmotic pressure of blood. This is Albumin A (alb-a) from Xenopus laevis (African clawed frog).